The following is a 447-amino-acid chain: Phosphoglucosamine mutase (447 aa).

The active-site Phosphoserine intermediate is Ser106. Mg(2+) is bound by residues Ser106, Asp245, Asp247, and Asp249. Residue Ser106 is modified to Phosphoserine.

This sequence belongs to the phosphohexose mutase family. Mg(2+) is required as a cofactor. Post-translationally, activated by phosphorylation.

The enzyme catalyses alpha-D-glucosamine 1-phosphate = D-glucosamine 6-phosphate. Catalyzes the conversion of glucosamine-6-phosphate to glucosamine-1-phosphate. The sequence is that of Phosphoglucosamine mutase from Cupriavidus metallidurans (strain ATCC 43123 / DSM 2839 / NBRC 102507 / CH34) (Ralstonia metallidurans).